The following is a 436-amino-acid chain: UPF0597 protein YhaM (436 aa).

The protein belongs to the UPF0597 family.

This is UPF0597 protein YhaM from Shigella boydii serotype 4 (strain Sb227).